The sequence spans 146 residues: 3-hydroxyacyl-[acyl-carrier-protein] dehydratase FabZ (146 aa).

His-48 is a catalytic residue.

Belongs to the thioester dehydratase family. FabZ subfamily.

The protein localises to the cytoplasm. The catalysed reaction is a (3R)-hydroxyacyl-[ACP] = a (2E)-enoyl-[ACP] + H2O. Involved in unsaturated fatty acids biosynthesis. Catalyzes the dehydration of short chain beta-hydroxyacyl-ACPs and long chain saturated and unsaturated beta-hydroxyacyl-ACPs. This chain is 3-hydroxyacyl-[acyl-carrier-protein] dehydratase FabZ, found in Campylobacter lari (strain RM2100 / D67 / ATCC BAA-1060).